The chain runs to 207 residues: Casparian strip membrane protein 1 (207 aa).

Position 2 is an N-acetylalanine (alanine 2). The Cytoplasmic segment spans residues 2–44; that stretch reads AKESTTIDVGEPNTMTKSTSHVVVDEKKKKGFVAAAAGGGYKR. A helical membrane pass occupies residues 45–65; it reads GLAVFDFLLRLAAIGITIGAS. Topologically, residues 66-95 are extracellular; it reads SVMFTAEETLPFFTQFLQFQAGYDDFPTFQ. The helical transmembrane segment at 96–116 threads the bilayer; sequence FFVIAIAIVASYLVLSLPFSI. Topologically, residues 117-128 are cytoplasmic; that stretch reads VTIVRPLAVAPR. A helical membrane pass occupies residues 129–149; that stretch reads LILLISDTVVLTLTTAAAAAA. Residues 150–181 are Extracellular-facing; it reads ASIVYLAHNGNTNTNWLPICQQFGDFCQTAST. The helical transmembrane segment at 182–202 threads the bilayer; sequence AVVAASISVAFFVLLIVISAI. Residues 203–207 lie on the Cytoplasmic side of the membrane; that stretch reads ALKRH.

This sequence belongs to the Casparian strip membrane proteins (CASP) family. In terms of assembly, homodimer and heterodimers.

It is found in the cell membrane. In terms of biological role, regulates membrane-cell wall junctions and localized cell wall deposition. Required for establishment of the Casparian strip membrane domain (CSD) and the subsequent formation of Casparian strips, a cell wall modification of the root endodermis that determines an apoplastic barrier between the intraorganismal apoplasm and the extraorganismal apoplasm and prevents lateral diffusion. The sequence is that of Casparian strip membrane protein 1 from Raphanus raphanistrum (Wild radish).